Here is a 365-residue protein sequence, read N- to C-terminus: tRNA 2-selenouridine synthase (365 aa).

In terms of domain architecture, Rhodanese spans 15–138; sequence LVSDHPIMDA…MRQFLIETID (124 aa). Cys-98 serves as the catalytic S-selanylcysteine intermediate.

This sequence belongs to the SelU family. In terms of assembly, monomer.

The enzyme catalyses 5-methylaminomethyl-2-thiouridine(34) in tRNA + selenophosphate + (2E)-geranyl diphosphate + H2O + H(+) = 5-methylaminomethyl-2-selenouridine(34) in tRNA + (2E)-thiogeraniol + phosphate + diphosphate. It catalyses the reaction 5-methylaminomethyl-2-thiouridine(34) in tRNA + (2E)-geranyl diphosphate = 5-methylaminomethyl-S-(2E)-geranyl-thiouridine(34) in tRNA + diphosphate. The catalysed reaction is 5-methylaminomethyl-S-(2E)-geranyl-thiouridine(34) in tRNA + selenophosphate + H(+) = 5-methylaminomethyl-2-(Se-phospho)selenouridine(34) in tRNA + (2E)-thiogeraniol. It carries out the reaction 5-methylaminomethyl-2-(Se-phospho)selenouridine(34) in tRNA + H2O = 5-methylaminomethyl-2-selenouridine(34) in tRNA + phosphate. Functionally, involved in the post-transcriptional modification of the uridine at the wobble position (U34) of tRNA(Lys), tRNA(Glu) and tRNA(Gln). Catalyzes the conversion of 2-thiouridine (S2U-RNA) to 2-selenouridine (Se2U-RNA). Acts in a two-step process involving geranylation of 2-thiouridine (S2U) to S-geranyl-2-thiouridine (geS2U) and subsequent selenation of the latter derivative to 2-selenouridine (Se2U) in the tRNA chain. The chain is tRNA 2-selenouridine synthase from Shewanella piezotolerans (strain WP3 / JCM 13877).